The chain runs to 306 residues: tRNA dimethylallyltransferase (306 aa).

G6 to S13 is an ATP binding site. Position 8-13 (T8–S13) interacts with substrate.

It belongs to the IPP transferase family. In terms of assembly, monomer. Mg(2+) serves as cofactor.

It carries out the reaction adenosine(37) in tRNA + dimethylallyl diphosphate = N(6)-dimethylallyladenosine(37) in tRNA + diphosphate. Catalyzes the transfer of a dimethylallyl group onto the adenine at position 37 in tRNAs that read codons beginning with uridine, leading to the formation of N6-(dimethylallyl)adenosine (i(6)A). In Sphingopyxis alaskensis (strain DSM 13593 / LMG 18877 / RB2256) (Sphingomonas alaskensis), this protein is tRNA dimethylallyltransferase.